The sequence spans 638 residues: Probable lysine-specific demethylase 4F (638 aa).

In terms of domain architecture, JmjN spans 15 to 57 (IMTFYPTMEEFADFNTYVAYMESQGAHRAGLAKVIPPKEWKAR). Tyr-133 is a binding site for 2-oxoglutarate. In terms of domain architecture, JmjC spans 143 to 309 (EESTKQWNLG…YGKVASQCSC (167 aa)). Fe cation contacts are provided by His-189 and Glu-191. Asn-199 and Lys-207 together coordinate 2-oxoglutarate. Zn(2+) is bound by residues Cys-235 and His-241. Lys-242 contributes to the 2-oxoglutarate binding site. Position 277 (His-277) interacts with Fe cation. Zn(2+) is bound by residues Cys-307 and Cys-309. The interval 426–474 (PCRGCGRGRGRGRGRGRRPRELGTEETTVQSAAKRRLSVGTGSRAPGRK) is disordered. Basic residues predominate over residues 431-443 (GRGRGRGRGRGRR).

The protein belongs to the JHDM3 histone demethylase family. Requires Fe(2+) as cofactor.

The protein resides in the nucleus. It carries out the reaction N(6),N(6),N(6)-trimethyl-L-lysyl(9)-[histone H3] + 2 2-oxoglutarate + 2 O2 = N(6)-methyl-L-lysyl(9)-[histone H3] + 2 formaldehyde + 2 succinate + 2 CO2. Probable histone demethylase that specifically demethylates 'Lys-9' of histone H3, thereby playing a central role in histone code. This Homo sapiens (Human) protein is Probable lysine-specific demethylase 4F.